Reading from the N-terminus, the 95-residue chain is Small ribosomal subunit protein bS16 (95 aa).

The protein belongs to the bacterial ribosomal protein bS16 family.

In Streptococcus pneumoniae (strain CGSP14), this protein is Small ribosomal subunit protein bS16.